A 200-amino-acid polypeptide reads, in one-letter code: Outer-membrane lipoprotein LolB (200 aa).

An N-terminal signal peptide occupies residues 1-18 (MRRGRLLIAGLAALVLSA). The N-palmitoyl cysteine moiety is linked to residue Cys-19. The S-diacylglycerol cysteine moiety is linked to residue Cys-19.

It belongs to the LolB family. In terms of assembly, monomer.

It localises to the cell outer membrane. Its function is as follows. Plays a critical role in the incorporation of lipoproteins in the outer membrane after they are released by the LolA protein. This Alkalilimnicola ehrlichii (strain ATCC BAA-1101 / DSM 17681 / MLHE-1) protein is Outer-membrane lipoprotein LolB.